Consider the following 626-residue polypeptide: DNA polymerase 2 (626 aa).

It belongs to the DNA polymerase type-B family.

The enzyme catalyses DNA(n) + a 2'-deoxyribonucleoside 5'-triphosphate = DNA(n+1) + diphosphate. Its function is as follows. This polymerase is devoid of exonuclease activity. The polypeptide is DNA polymerase 2 (dpo2) (Saccharolobus solfataricus (strain ATCC 35092 / DSM 1617 / JCM 11322 / P2) (Sulfolobus solfataricus)).